Consider the following 333-residue polypeptide: Serine racemase (333 aa).

Residue Glu13 coordinates Mg(2+). Positions 31, 32, 33, 51, and 52 each coordinate ATP. Lys56 functions as the Proton acceptor in the catalytic mechanism. Residue Lys56 is modified to N6-(pyridoxal phosphate)lysine. Residue Pro69 coordinates Ca(2+). Thr71 bears the Phosphothreonine mark. Thr81 is a binding site for Ca(2+). Ser84 functions as the Proton acceptor in the catalytic mechanism. A pyridoxal 5'-phosphate-binding site is contributed by Asn86. Gln89 is a binding site for ATP. Cys113 bears the S-nitrosocysteine mark. Residue Tyr121 participates in ATP binding. Asn154 serves as a coordination point for pyridoxal 5'-phosphate. Residue Asp178 participates in Mg(2+) binding. Pyridoxal 5'-phosphate-binding residues include Gly185, Gly186, Gly187, Gly188, and Met189. Glu210, Ala214, Asp216, and Asn247 together coordinate Mg(2+). The Ca(2+) site is built by Glu210, Ala214, Asp216, and Asn247. Residues Glu210, Ala214, and Asp216 each coordinate Mn(2+). Lys279 provides a ligand contact to ATP. Ser313 serves as a coordination point for pyridoxal 5'-phosphate. Asn316 provides a ligand contact to ATP.

The protein belongs to the serine/threonine dehydratase family. Homodimer. It depends on Mg(2+) as a cofactor. Mn(2+) serves as cofactor. Requires Ca(2+) as cofactor. The cofactor is pyridoxal 5'-phosphate. In terms of processing, S-nitrosylated, leading to decrease the enzyme activity. As to expression, expressed in the cerebellum and frontal cortex (at protein level).

The catalysed reaction is L-serine = D-serine. It carries out the reaction D-serine = pyruvate + NH4(+). The enzyme catalyses L-serine = pyruvate + NH4(+). With respect to regulation, allosterically activated by magnesium, and possibly also other divalent metal cations. Allosterically activated by ATP, ADP or GTP. Competitively inhibited by malonate. In terms of biological role, catalyzes the synthesis of D-serine from L-serine. D-serine is a key coagonist with glutamate at NMDA receptors. Has dehydratase activity towards both L-serine and D-serine. In Rattus norvegicus (Rat), this protein is Serine racemase (Srr).